Reading from the N-terminus, the 346-residue chain is CLOCK-interacting pacemaker (346 aa).

The segment covering 1 to 42 has biased composition (basic and acidic residues); that stretch reads MEKNQKCATEQERFKARSGHGDGQRAEPRKTQTTTESDKDSG. Disordered regions lie at residues 1 to 83 and 167 to 228; these read MEKN…SQPQ and CARK…KELD. The segment covering 50-68 has biased composition (polar residues); the sequence is CLSSVEQTDTEEGPTTSRW. The segment covering 179–192 has biased composition (basic residues); sequence NQTKRQCSKGHSGS. Residues 205–222 are compositionally biased toward polar residues; it reads GVQQGPVDQNVKESSVSA. Residues 283-315 are a coiled coil; the sequence is MKTKELARHNQATQSQLEKLQEQVQLYATAMSS.

It is found in the nucleus. The protein localises to the cytoplasm. It localises to the cytosol. Its function is as follows. Transcriptional repressor which acts as a negative-feedback regulator of CLOCK-BMAL1 transcriptional activity in the circadian-clock mechanism. The physiological relevance of these observations is unsure. The sequence is that of CLOCK-interacting pacemaker (cipc) from Xenopus laevis (African clawed frog).